The following is a 273-amino-acid chain: SPbeta prophage-derived uncharacterized protein YomF (273 aa).

Residues 119-149 adopt a coiled-coil conformation; the sequence is VIETLQGLIDEAEDTIIRMNERIAECERVTK.

This Bacillus subtilis (strain 168) protein is SPbeta prophage-derived uncharacterized protein YomF (yomF).